We begin with the raw amino-acid sequence, 632 residues long: PWWP domain-containing protein 5 (632 aa).

The PWWP domain occupies 97-158 (DSDLVWAKLR…ASQIKPFHQN (62 aa)). Residues 310–452 (RKTDYKDNAE…AERKISSPDE (143 aa)) are disordered. Composition is skewed to basic and acidic residues over residues 313 to 326 (DYKD…EKTL), 339 to 364 (STEK…GKSE), 371 to 383 (QQKE…HSNE), and 425 to 449 (KSTE…KISS). Positions 352-359 (KRKVESSE) match the Nuclear localization signal motif.

Belongs to the PDP family. Component of the PRC2 (polycomb repressive complex 2) complex which regulates histone methylation on histone H3K27.

The protein resides in the nucleus. May influence gene expression by regulating the function of the PRC2 complex and modulating H3K27me3 level. This chain is PWWP domain-containing protein 5, found in Arabidopsis thaliana (Mouse-ear cress).